A 346-amino-acid chain; its full sequence is E3 ubiquitin-protein ligase RNF146-A (346 aa).

Residues 37-75 (CAICLQTCVHPVSLPCKHVFCYLCVKGASWLGKRCALCR) form an RING-type zinc finger. Positions 91–167 (PELKAASRGN…EHGRRRKIKR (77 aa)) constitute a WWE domain. Disordered regions lie at residues 195–240 (SSAD…GTSL) and 256–301 (ERSH…ALVA). Over residues 202–216 (SVPAQSGASVQSSSV) the composition is skewed to low complexity. Over residues 281-295 (SIEETESDASSDSED) the composition is skewed to acidic residues.

As to quaternary structure, interacts with poly-ADP-ribosylated AXIN1, AXIN2, BLZF1 and CASC3. Post-translationally, ubiquitinated; autoubiquitinated. Autoubiquitination is enhanced upon poly(ADP-ribose)-binding.

The protein resides in the cytoplasm. It is found in the cytosol. The catalysed reaction is S-ubiquitinyl-[E2 ubiquitin-conjugating enzyme]-L-cysteine + [acceptor protein]-L-lysine = [E2 ubiquitin-conjugating enzyme]-L-cysteine + N(6)-ubiquitinyl-[acceptor protein]-L-lysine.. Its pathway is protein modification; protein ubiquitination. In terms of biological role, E3 ubiquitin-protein ligase that specifically binds poly-ADP-ribosylated proteins and mediates their ubiquitination and subsequent degradation. Acts as an activator of the Wnt signaling pathway by mediating the ubiquitination of poly-ADP-ribosylated AXIN1 and AXIN2, 2 key components of the beta-catenin destruction complex. Acts in cooperation with tankyrase proteins (TNKS and TNKS2), which mediate poly-ADP-ribosylation of target proteins AXIN1, AXIN2, BLZF1, CASC3, TNKS and TNKS2. Recognizes and binds tankyrase-dependent poly-ADP-ribosylated proteins via its WWE domain and mediates their ubiquitination. This chain is E3 ubiquitin-protein ligase RNF146-A (RNF146A), found in Bos taurus (Bovine).